Consider the following 291-residue polypeptide: Transcription factor bHLH53 (291 aa).

In terms of domain architecture, bHLH spans 163-212 (PTLSSQSIAARGRRRRIAEKTHELGKLIPGGNKLNTAEMFQAAAKYVKFL).

Homodimer. As to expression, expressed constitutively in roots, leaves, stems, and flowers.

The protein localises to the nucleus. In Arabidopsis thaliana (Mouse-ear cress), this protein is Transcription factor bHLH53 (BHLH53).